The following is a 264-amino-acid chain: Thymidylate synthase (264 aa).

Arg-21 is a dUMP binding site. His-51 is a (6R)-5,10-methylene-5,6,7,8-tetrahydrofolate binding site. Residue 126–127 (RR) coordinates dUMP. Cys-146 (nucleophile) is an active-site residue. DUMP is bound by residues 166 to 169 (RSAD), Asn-177, and 207 to 209 (HLY). Asp-169 is a binding site for (6R)-5,10-methylene-5,6,7,8-tetrahydrofolate. Ala-263 is a binding site for (6R)-5,10-methylene-5,6,7,8-tetrahydrofolate.

This sequence belongs to the thymidylate synthase family. Bacterial-type ThyA subfamily. In terms of assembly, homodimer.

It localises to the cytoplasm. It catalyses the reaction dUMP + (6R)-5,10-methylene-5,6,7,8-tetrahydrofolate = 7,8-dihydrofolate + dTMP. Its pathway is pyrimidine metabolism; dTTP biosynthesis. Catalyzes the reductive methylation of 2'-deoxyuridine-5'-monophosphate (dUMP) to 2'-deoxythymidine-5'-monophosphate (dTMP) while utilizing 5,10-methylenetetrahydrofolate (mTHF) as the methyl donor and reductant in the reaction, yielding dihydrofolate (DHF) as a by-product. This enzymatic reaction provides an intracellular de novo source of dTMP, an essential precursor for DNA biosynthesis. This is Thymidylate synthase from Polynucleobacter asymbioticus (strain DSM 18221 / CIP 109841 / QLW-P1DMWA-1) (Polynucleobacter necessarius subsp. asymbioticus).